A 288-amino-acid polypeptide reads, in one-letter code: ATP synthase gamma chain (288 aa).

The protein belongs to the ATPase gamma chain family. As to quaternary structure, F-type ATPases have 2 components, CF(1) - the catalytic core - and CF(0) - the membrane proton channel. CF(1) has five subunits: alpha(3), beta(3), gamma(1), delta(1), epsilon(1). CF(0) has three main subunits: a, b and c.

The protein localises to the cell inner membrane. Produces ATP from ADP in the presence of a proton gradient across the membrane. The gamma chain is believed to be important in regulating ATPase activity and the flow of protons through the CF(0) complex. The chain is ATP synthase gamma chain from Rickettsia akari (strain Hartford).